Reading from the N-terminus, the 533-residue chain is Probable intron-encoded endonuclease 3 (533 aa).

Transmembrane regions (helical) follow at residues 1–21, 30–50, and 81–101; these read MYLSIIILPLLGSIVAGFFGR, LITCLSVIITTGLAILAFFEV, and LTVAMLIPVLIISSLVHIYSI. The segment at 1–108 is ndh-5 exon 1 encoded; that stretch reads MYLSIIILPL…YSISYMSHDP (108 aa). A ndh-5 intron 1 encoded region spans residues 109–533; sequence RGRVRGKRVY…SISLLLGRRR (425 aa).

This sequence in the N-terminal section; belongs to the complex I subunit 5 family. In the C-terminal section; belongs to the LAGLIDADG endonuclease family.

The protein localises to the mitochondrion membrane. Its function is as follows. Mitochondrial DNA endonuclease involved in intron homing. This chain is Probable intron-encoded endonuclease 3, found in Neurospora crassa (strain ATCC 24698 / 74-OR23-1A / CBS 708.71 / DSM 1257 / FGSC 987).